The sequence spans 713 residues: B3 domain-containing transcription factor VAL3 (713 aa).

A DNA-binding region (TF-B3) is located at residues 328–427 (FEKILSATDT…KLILGFRKAS (100 aa)). Disordered regions lie at residues 459–478 (VECS…SKRQ) and 616–713 (LNSD…TSSM). Basic residues predominate over residues 464 to 477 (GKKKSSMMITRSKR). Positions 616 to 629 (LNSDNGLHQSANNS) are enriched in polar residues. Basic and acidic residues predominate over residues 663-674 (TKSETLPHDDTV). Residues 676-688 (SSFTSPSSSSAHS) are compositionally biased toward low complexity. The span at 690–700 (NNKEDEGKLKT) shows a compositional bias: basic and acidic residues. The segment covering 701–713 (TTEIADTTTTSSM) has biased composition (low complexity).

The protein resides in the nucleus. In terms of biological role, may be involved in plant development. In Arabidopsis thaliana (Mouse-ear cress), this protein is B3 domain-containing transcription factor VAL3 (VAL3).